A 399-amino-acid polypeptide reads, in one-letter code: Argininosuccinate synthase (399 aa).

8 to 16 (AYSGGLDTT) contacts ATP. Tyr-87 serves as a coordination point for L-citrulline. Gly-117 contacts ATP. L-aspartate contacts are provided by Thr-119, Asn-123, and Asp-124. Asn-123 contacts L-citrulline. Residues Arg-127, Ser-175, Glu-259, and Tyr-271 each coordinate L-citrulline.

It belongs to the argininosuccinate synthase family. Type 1 subfamily. As to quaternary structure, homotetramer.

The protein resides in the cytoplasm. The catalysed reaction is L-citrulline + L-aspartate + ATP = 2-(N(omega)-L-arginino)succinate + AMP + diphosphate + H(+). The protein operates within amino-acid biosynthesis; L-arginine biosynthesis; L-arginine from L-ornithine and carbamoyl phosphate: step 2/3. This chain is Argininosuccinate synthase, found in Corynebacterium urealyticum (strain ATCC 43042 / DSM 7109).